The sequence spans 911 residues: DNA polymerase I (911 aa).

A 5'-3' exonuclease domain is found at 186–280; that stretch reads VTPAQYPDLA…DTLRLQPWDR (95 aa). Positions 320-497 constitute a 3'-5' exonuclease domain; the sequence is RGGLLESGTV…LAAALDAELD (178 aa).

The protein belongs to the DNA polymerase type-A family. In terms of assembly, single-chain monomer with multiple functions.

It catalyses the reaction DNA(n) + a 2'-deoxyribonucleoside 5'-triphosphate = DNA(n+1) + diphosphate. Functionally, in addition to polymerase activity, this DNA polymerase exhibits 3'-5' and 5'-3' exonuclease activity. The chain is DNA polymerase I (polA) from Mycobacterium leprae (strain TN).